We begin with the raw amino-acid sequence, 936 residues long: Protein translocase subunit SecA (936 aa).

ATP contacts are provided by residues Q87, 105-109, and D515; that span reads GEGKT. Zn(2+) is bound by residues C920, C922, C931, and H932.

Belongs to the SecA family. In terms of assembly, monomer and homodimer. Part of the essential Sec protein translocation apparatus which comprises SecA, SecYEG and auxiliary proteins SecDF-YajC and YidC. The cofactor is Zn(2+).

It is found in the cell inner membrane. The protein localises to the cytoplasm. It carries out the reaction ATP + H2O + cellular proteinSide 1 = ADP + phosphate + cellular proteinSide 2.. Functionally, part of the Sec protein translocase complex. Interacts with the SecYEG preprotein conducting channel. Has a central role in coupling the hydrolysis of ATP to the transfer of proteins into and across the cell membrane, serving both as a receptor for the preprotein-SecB complex and as an ATP-driven molecular motor driving the stepwise translocation of polypeptide chains across the membrane. This Paraburkholderia phymatum (strain DSM 17167 / CIP 108236 / LMG 21445 / STM815) (Burkholderia phymatum) protein is Protein translocase subunit SecA.